The chain runs to 341 residues: Sulfate/thiosulfate import ATP-binding protein CysA 2 (341 aa).

The ABC transporter domain occupies 3-235 (IRLENVVKTF…PNSSFVMRFL (233 aa)). Residue 35–42 (GPSGSGKT) participates in ATP binding.

It belongs to the ABC transporter superfamily. Sulfate/tungstate importer (TC 3.A.1.6) family. As to quaternary structure, the complex is composed of two ATP-binding proteins (CysA), two transmembrane proteins (CysT and CysW) and a solute-binding protein (CysP).

Its subcellular location is the cell inner membrane. The catalysed reaction is sulfate(out) + ATP + H2O = sulfate(in) + ADP + phosphate + H(+). It carries out the reaction thiosulfate(out) + ATP + H2O = thiosulfate(in) + ADP + phosphate + H(+). Functionally, part of the ABC transporter complex CysAWTP involved in sulfate/thiosulfate import. Responsible for energy coupling to the transport system. This chain is Sulfate/thiosulfate import ATP-binding protein CysA 2, found in Agrobacterium fabrum (strain C58 / ATCC 33970) (Agrobacterium tumefaciens (strain C58)).